Reading from the N-terminus, the 243-residue chain is E3 ubiquitin-protein ligase RMA3 (243 aa).

Residues 44–92 (CNICLDTAHDPVVTLCGHLFCWPCIYKWLHVQLSSVSVDQHQNNCPVCK) form an RING-type zinc finger. Residues 110-135 (SPSSTFGSKKQDALSTDIPRRPAPSA) form a disordered region. The helical; Anchor for type IV membrane protein transmembrane segment at 223–243 (KSLNRVSIFFLCCIILCLLLF) threads the bilayer.

As to expression, ubiquitous. Highly expressed in roots.

It is found in the endoplasmic reticulum membrane. It catalyses the reaction S-ubiquitinyl-[E2 ubiquitin-conjugating enzyme]-L-cysteine + [acceptor protein]-L-lysine = [E2 ubiquitin-conjugating enzyme]-L-cysteine + N(6)-ubiquitinyl-[acceptor protein]-L-lysine.. The protein operates within protein modification; protein ubiquitination. Functionally, E3 ubiquitin-protein ligase. The sequence is that of E3 ubiquitin-protein ligase RMA3 (RMA3) from Arabidopsis thaliana (Mouse-ear cress).